Reading from the N-terminus, the 571-residue chain is Glutamate--tRNA ligase (571 aa).

Residues 114–124 carry the 'HIGH' region motif; that stretch reads PNPNGPWHVGH. Positions 431–453 are disordered; the sequence is KPLAGGPESASPPLHPNDEDRGR.

It belongs to the class-I aminoacyl-tRNA synthetase family. Glutamate--tRNA ligase type 2 subfamily.

Its subcellular location is the cytoplasm. It carries out the reaction tRNA(Glu) + L-glutamate + ATP = L-glutamyl-tRNA(Glu) + AMP + diphosphate. Functionally, catalyzes the attachment of glutamate to tRNA(Glu) in a two-step reaction: glutamate is first activated by ATP to form Glu-AMP and then transferred to the acceptor end of tRNA(Glu). This chain is Glutamate--tRNA ligase, found in Natronomonas pharaonis (strain ATCC 35678 / DSM 2160 / CIP 103997 / JCM 8858 / NBRC 14720 / NCIMB 2260 / Gabara) (Halobacterium pharaonis).